The chain runs to 875 residues: Alanine--tRNA ligase (875 aa).

Zn(2+)-binding residues include His-567, His-571, Cys-669, and His-673.

This sequence belongs to the class-II aminoacyl-tRNA synthetase family. It depends on Zn(2+) as a cofactor.

The protein localises to the cytoplasm. It carries out the reaction tRNA(Ala) + L-alanine + ATP = L-alanyl-tRNA(Ala) + AMP + diphosphate. In terms of biological role, catalyzes the attachment of alanine to tRNA(Ala) in a two-step reaction: alanine is first activated by ATP to form Ala-AMP and then transferred to the acceptor end of tRNA(Ala). Also edits incorrectly charged Ser-tRNA(Ala) and Gly-tRNA(Ala) via its editing domain. This is Alanine--tRNA ligase from Geobacter sulfurreducens (strain ATCC 51573 / DSM 12127 / PCA).